The primary structure comprises 629 residues: tRNA uridine 5-carboxymethylaminomethyl modification enzyme MnmG (629 aa).

13-18 is an FAD binding site; sequence GGGHAG. 273 to 287 is a binding site for NAD(+); the sequence is GPRYCPSIEDKVVRF.

The protein belongs to the MnmG family. As to quaternary structure, homodimer. Heterotetramer of two MnmE and two MnmG subunits. It depends on FAD as a cofactor.

It localises to the cytoplasm. NAD-binding protein involved in the addition of a carboxymethylaminomethyl (cmnm) group at the wobble position (U34) of certain tRNAs, forming tRNA-cmnm(5)s(2)U34. The protein is tRNA uridine 5-carboxymethylaminomethyl modification enzyme MnmG of Alkalilimnicola ehrlichii (strain ATCC BAA-1101 / DSM 17681 / MLHE-1).